The primary structure comprises 720 residues: GTPase-activating protein gyp2 (720 aa).

The region spanning 20–85 (LDPASFFRIN…AAVRKLEREN (66 aa)) is the GRAM domain. Residues 216-404 (GIPNNLRADI…RILDCLFVNG (189 aa)) enclose the Rab-GAP TBC domain.

The protein resides in the cytoplasm. Its subcellular location is the nucleus. Its function is as follows. Stimulates specifically the GTPase activity of ypt2 and ryh1. Inactivates ryh1 during recycling between the endosome and the Golgi compartments. This chain is GTPase-activating protein gyp2, found in Schizosaccharomyces pombe (strain 972 / ATCC 24843) (Fission yeast).